The sequence spans 308 residues: Homoserine kinase (308 aa).

Residue 95-105 coordinates ATP; it reads PQSRGLGSSAA.

It belongs to the GHMP kinase family. Homoserine kinase subfamily.

Its subcellular location is the cytoplasm. The catalysed reaction is L-homoserine + ATP = O-phospho-L-homoserine + ADP + H(+). The protein operates within amino-acid biosynthesis; L-threonine biosynthesis; L-threonine from L-aspartate: step 4/5. Its function is as follows. Catalyzes the ATP-dependent phosphorylation of L-homoserine to L-homoserine phosphate. The protein is Homoserine kinase of Corynebacterium diphtheriae (strain ATCC 700971 / NCTC 13129 / Biotype gravis).